We begin with the raw amino-acid sequence, 116 residues long: Large ribosomal subunit protein bL19 (116 aa).

The protein belongs to the bacterial ribosomal protein bL19 family.

This protein is located at the 30S-50S ribosomal subunit interface and may play a role in the structure and function of the aminoacyl-tRNA binding site. This chain is Large ribosomal subunit protein bL19, found in Pseudomonas fluorescens (strain ATCC BAA-477 / NRRL B-23932 / Pf-5).